The sequence spans 1032 residues: Error-prone DNA polymerase (1032 aa).

The protein belongs to the DNA polymerase type-C family. DnaE2 subfamily.

Its subcellular location is the cytoplasm. The enzyme catalyses DNA(n) + a 2'-deoxyribonucleoside 5'-triphosphate = DNA(n+1) + diphosphate. DNA polymerase involved in damage-induced mutagenesis and translesion synthesis (TLS). It is not the major replicative DNA polymerase. This chain is Error-prone DNA polymerase, found in Hahella chejuensis (strain KCTC 2396).